The sequence spans 352 residues: UDP-N-acetylglucosamine--N-acetylmuramyl-(pentapeptide) pyrophosphoryl-undecaprenol N-acetylglucosamine transferase (352 aa).

UDP-N-acetyl-alpha-D-glucosamine is bound by residues Ser195 and Gln287.

This sequence belongs to the glycosyltransferase 28 family. MurG subfamily.

It is found in the cell membrane. It carries out the reaction Mur2Ac(oyl-L-Ala-gamma-D-Glu-L-Lys-D-Ala-D-Ala)-di-trans,octa-cis-undecaprenyl diphosphate + UDP-N-acetyl-alpha-D-glucosamine = beta-D-GlcNAc-(1-&gt;4)-Mur2Ac(oyl-L-Ala-gamma-D-Glu-L-Lys-D-Ala-D-Ala)-di-trans,octa-cis-undecaprenyl diphosphate + UDP + H(+). Its pathway is cell wall biogenesis; peptidoglycan biosynthesis. Cell wall formation. Catalyzes the transfer of a GlcNAc subunit on undecaprenyl-pyrophosphoryl-MurNAc-pentapeptide (lipid intermediate I) to form undecaprenyl-pyrophosphoryl-MurNAc-(pentapeptide)GlcNAc (lipid intermediate II). The protein is UDP-N-acetylglucosamine--N-acetylmuramyl-(pentapeptide) pyrophosphoryl-undecaprenol N-acetylglucosamine transferase of Streptococcus pneumoniae (strain Taiwan19F-14).